Reading from the N-terminus, the 137-residue chain is Kunitz-type trypsin inhibitor alpha chain (137 aa).

Cys40 and Cys86 are disulfide-bonded.

It belongs to the protease inhibitor I3 (leguminous Kunitz-type inhibitor) family. Heterodimer of an alpha and a beta chain linked by a disulfide bond.

Functionally, inhibition of trypsin. This Neltuma juliflora (Mesquite) protein is Kunitz-type trypsin inhibitor alpha chain.